Reading from the N-terminus, the 127-residue chain is Fluoride-specific ion channel FluC (127 aa).

The next 4 helical transmembrane spans lie at 4–24 (LLLA…MLSM), 35–55 (IGTL…FAWF), 71–91 (TGFC…VFLL), and 103–123 (VLIN…LFSA). Na(+) contacts are provided by glycine 75 and threonine 78.

The protein belongs to the fluoride channel Fluc/FEX (TC 1.A.43) family.

The protein resides in the cell inner membrane. The catalysed reaction is fluoride(in) = fluoride(out). Na(+) is not transported, but it plays an essential structural role and its presence is essential for fluoride channel function. Fluoride-specific ion channel. Important for reducing fluoride concentration in the cell, thus reducing its toxicity. The sequence is that of Fluoride-specific ion channel FluC from Salmonella agona (strain SL483).